The chain runs to 305 residues: Short-chain dehydrogenase/reductase VdtF (305 aa).

NADP(+) contacts are provided by Leu28 and Asn98. Catalysis depends on Ser192, which acts as the Proton donor. The NADP(+) site is built by Tyr206, Lys210, and Thr241. Tyr206 serves as the catalytic Proton acceptor. The active-site Lowers pKa of active site Tyr is the Lys210.

This sequence belongs to the short-chain dehydrogenases/reductases (SDR) family.

The enzyme catalyses methyl 2-[(3S)-9,10-dihydroxy-7-methoxy-1-oxo-1H,3H,4H-naphtho[2,3-c]pyran-3-yl]acetate + AH2 = semiviriditoxin + A. The catalysed reaction is 9,10-dihydroxy-7-methoxy-3-(2-oxopropyl)-1H-benzo[g]isochromen-1-one + AH2 = (3S)-9,10-dihydroxy-7-methoxy-3-(2-oxopropyl)-1H,3H,4H-naphtho[2,3-c]pyran-1-one + A. It functions in the pathway secondary metabolite biosynthesis. Functionally, short-chain dehydrogenase/reductase; part of the gene cluster that mediates the biosynthesis of viriditoxin, one of the 'classical' secondary metabolites produced by fungi and that has antibacterial activity. The first step is performed by the polyketide synthase VdtA which condenses one acetyl-CoA and 6 malonyl-CoA units to form the heptaketide monomer backbone of viriditoxin. The product of VdtA is then O-methylated on C7 by the O-methyltransferase VdtC. The O-methyl group is important for the stereoselective coupling of the monomers at the final step of viriditoxin biosynthesis. The short-chain dehydrogenase/reductase VdtF then acts as a stereospecific reductase converting the pyrone to dihydropyrone via the reduction of the C3-C4 double bond. The FAD-binding monooxygenase VdtE then converts the ketone group into a methyl-ester group to yield semi-viriditoxin. Finally, the laccase VdtB is involved in dimerization of 2 semi-viriditoxin molecules to yield the final viriditoxin. VdtB is responsible for the regioselective 6,6'-coupling of semi-viriditoxin, which yields (M)-viriditoxin and (P)-viriditoxin at a ratio of 1:2. The non-catalytic carboxylesterase-like protein VdtD affects the stereochemistical outcome of the coupling. The highly reducing polyketide synthase VdtX is not involved in viriditoxin synthesis, but might possibly play a role in the production of additional metabolites not identified yet. The polypeptide is Short-chain dehydrogenase/reductase VdtF (Byssochlamys spectabilis (Paecilomyces variotii)).